Consider the following 98-residue polypeptide: NADH-ubiquinone oxidoreductase chain 4L (98 aa).

Transmembrane regions (helical) follow at residues Met-1–Met-21, Ala-29–Leu-49, and Ile-61–Val-81.

This sequence belongs to the complex I subunit 4L family. Core subunit of respiratory chain NADH dehydrogenase (Complex I) which is composed of 45 different subunits.

Its subcellular location is the mitochondrion inner membrane. The catalysed reaction is a ubiquinone + NADH + 5 H(+)(in) = a ubiquinol + NAD(+) + 4 H(+)(out). Its function is as follows. Core subunit of the mitochondrial membrane respiratory chain NADH dehydrogenase (Complex I) which catalyzes electron transfer from NADH through the respiratory chain, using ubiquinone as an electron acceptor. Part of the enzyme membrane arm which is embedded in the lipid bilayer and involved in proton translocation. The polypeptide is NADH-ubiquinone oxidoreductase chain 4L (MT-ND4L) (Balaenoptera bonaerensis (Antarctic minke whale)).